Reading from the N-terminus, the 515-residue chain is Endoglucanase 23 (515 aa).

Residues 1-29 form the signal peptide; that stretch reads MALLSAPVRRRRSRVRVLLVCCCLLLALA. Asp-95 (nucleophile) is an active-site residue. 3 N-linked (GlcNAc...) asparagine glycosylation sites follow: Asn-178, Asn-375, and Asn-384. The active site involves His-426. Asn-452 carries N-linked (GlcNAc...) asparagine glycosylation. Active-site residues include Asp-477 and Glu-486.

Belongs to the glycosyl hydrolase 9 (cellulase E) family.

The protein localises to the secreted. It carries out the reaction Endohydrolysis of (1-&gt;4)-beta-D-glucosidic linkages in cellulose, lichenin and cereal beta-D-glucans.. This chain is Endoglucanase 23 (GLU12), found in Oryza sativa subsp. japonica (Rice).